The primary structure comprises 72 residues: Protein RALF-like 20 (72 aa).

A signal peptide spans 1 to 27 (MVLSKKTIMQSFALMIILSIVMSTTEA). 2 disulfide bridges follow: C43–C51 and C63–C69.

Belongs to the plant rapid alkalinization factor (RALF) family.

It is found in the secreted. In terms of biological role, cell signaling peptide that may regulate plant stress, growth, and development. Mediates a rapid alkalinization of extracellular space by mediating a transient increase in the cytoplasmic Ca(2+) concentration leading to a calcium-dependent signaling events through a cell surface receptor and a concomitant activation of some intracellular mitogen-activated protein kinases. This is Protein RALF-like 20 (RALFL20) from Arabidopsis thaliana (Mouse-ear cress).